Consider the following 173-residue polypeptide: 6,7-dimethyl-8-ribityllumazine synthase (173 aa).

5-amino-6-(D-ribitylamino)uracil is bound by residues F24, 58 to 60 (ALE), and 82 to 84 (AVI). 87–88 (ET) contacts (2S)-2-hydroxy-3-oxobutyl phosphate. The active-site Proton donor is H90. N115 provides a ligand contact to 5-amino-6-(D-ribitylamino)uracil. R129 serves as a coordination point for (2S)-2-hydroxy-3-oxobutyl phosphate. The interval 150–173 (ALEPEEDDEDDEDEDFDDEEDDGR) is disordered. Over residues 152 to 173 (EPEEDDEDDEDEDFDDEEDDGR) the composition is skewed to acidic residues.

Belongs to the DMRL synthase family.

The catalysed reaction is (2S)-2-hydroxy-3-oxobutyl phosphate + 5-amino-6-(D-ribitylamino)uracil = 6,7-dimethyl-8-(1-D-ribityl)lumazine + phosphate + 2 H2O + H(+). The protein operates within cofactor biosynthesis; riboflavin biosynthesis; riboflavin from 2-hydroxy-3-oxobutyl phosphate and 5-amino-6-(D-ribitylamino)uracil: step 1/2. In terms of biological role, catalyzes the formation of 6,7-dimethyl-8-ribityllumazine by condensation of 5-amino-6-(D-ribitylamino)uracil with 3,4-dihydroxy-2-butanone 4-phosphate. This is the penultimate step in the biosynthesis of riboflavin. This chain is 6,7-dimethyl-8-ribityllumazine synthase, found in Bordetella pertussis (strain Tohama I / ATCC BAA-589 / NCTC 13251).